Here is a 277-residue protein sequence, read N- to C-terminus: MEMO1 family protein TM_0087 (277 aa).

Belongs to the MEMO1 family.

This chain is MEMO1 family protein TM_0087, found in Thermotoga maritima (strain ATCC 43589 / DSM 3109 / JCM 10099 / NBRC 100826 / MSB8).